We begin with the raw amino-acid sequence, 195 residues long: Putative CheY-P phosphatase CheC1 (195 aa).

Belongs to the CheC family.

Functionally, catalyzes the dephosphorylation of CheY-P. This is Putative CheY-P phosphatase CheC1 (cheC1) from Halobacterium salinarum (strain ATCC 29341 / DSM 671 / R1).